The sequence spans 397 residues: Tryptophan synthase beta chain (397 aa).

N6-(pyridoxal phosphate)lysine is present on Lys86.

This sequence belongs to the TrpB family. Tetramer of two alpha and two beta chains. Requires pyridoxal 5'-phosphate as cofactor.

It catalyses the reaction (1S,2R)-1-C-(indol-3-yl)glycerol 3-phosphate + L-serine = D-glyceraldehyde 3-phosphate + L-tryptophan + H2O. It participates in amino-acid biosynthesis; L-tryptophan biosynthesis; L-tryptophan from chorismate: step 5/5. Its function is as follows. The beta subunit is responsible for the synthesis of L-tryptophan from indole and L-serine. This Aeromonas hydrophila subsp. hydrophila (strain ATCC 7966 / DSM 30187 / BCRC 13018 / CCUG 14551 / JCM 1027 / KCTC 2358 / NCIMB 9240 / NCTC 8049) protein is Tryptophan synthase beta chain.